The sequence spans 152 residues: Serglycin (152 aa).

An N-terminal signal peptide occupies residues 1 to 25 (MQVPVGSRLVLALAFVLVWGSSVQG). A propeptide spans 26–74 (YPARRARYQWVRCKPNGFFANCIEEKGPQFDLIDESNNIGPPMNNPVLM) (activation peptide). A disulfide bridge links Cys-38 with Cys-47. Residues 66 to 115 (PPMNNPVLMEGPSKDFISNYDDYGSGSGSGSGSGSGSGSGSGSGFLGDME) form a disordered region. Repeat copies occupy residues 89-90 (GS), 91-92 (GS), 93-94 (GS), 95-96 (GS), 97-98 (GS), 99-100 (GS), 101-102 (GS), 103-104 (GS), 105-106 (GS), and 107-108 (GS). The tract at residues 89–108 (GSGSGSGSGSGSGSGSGSGS) is 10 X 2 AA tandem repeats of G-S. The segment covering 90–110 (SGSGSGSGSGSGSGSGSGSGF) has biased composition (gly residues). O-linked (Xyl...) (glycosaminoglycan) serine glycans are attached at residues Ser-92 and Ser-94. O-linked (Xyl...) (glycosaminoglycan) serine glycosylation is found at Ser-98, Ser-100, Ser-102, Ser-104, Ser-106, and Ser-108.

It belongs to the serglycin family. In terms of assembly, binds to activated CD44 and to GZMB. Post-translationally, O-glycosylated; contains chondroitin sulfate and heparan sulfate.

The protein resides in the cytoplasmic granule. The protein localises to the cytolytic granule. It localises to the secreted. It is found in the extracellular space. Its subcellular location is the golgi apparatus. In terms of biological role, plays a role in formation of mast cell secretory granules and mediates storage of various compounds in secretory vesicles. Required for storage of some proteases in both connective tissue and mucosal mast cells and for storage of granzyme B in T-lymphocytes. Plays a role in localizing neutrophil elastase in azurophil granules of neutrophils. Mediates processing of MMP2. Plays a role in cytotoxic cell granule-mediated apoptosis by forming a complex with granzyme B which is delivered to cells by perforin to induce apoptosis. Regulates the secretion of TNF-alpha and may also regulate protease secretion. Inhibits bone mineralization. In Mus musculus (Mouse), this protein is Serglycin (Srgn).